The following is a 235-amino-acid chain: Regulator of G-protein signaling 18 (235 aa).

Phosphoserine is present on serine 49. In terms of domain architecture, RGS spans 86–202 (SFDKLLSHRD…LKSETYLHLI (117 aa)). A phosphoserine mark is found at serine 216 and serine 218.

In terms of tissue distribution, expressed in bone marrow, spleen, fetal liver and lung. At very low levels expressed in heart.

It localises to the cytoplasm. Functionally, inhibits signal transduction by increasing the GTPase activity of G protein alpha subunits thereby driving them into their inactive GDP-bound form. Binds to G(i) alpha-1, G(i) alpha-2, G(i) alpha-3 and G(q) alpha. This is Regulator of G-protein signaling 18 (Rgs18) from Mus musculus (Mouse).